The following is a 156-amino-acid chain: Ribosome maturation factor RimP (156 aa).

The protein belongs to the RimP family.

The protein localises to the cytoplasm. Functionally, required for maturation of 30S ribosomal subunits. This Lysinibacillus sphaericus (strain C3-41) protein is Ribosome maturation factor RimP.